Here is a 459-residue protein sequence, read N- to C-terminus: Sorting nexin-8 (459 aa).

The segment at 1–37 (MTGRAMDPLPSPAVAAAAEAEADEEADPPATGPRTSQ) is disordered. A PX domain is found at 68–176 (AKDTVQVELI…KLFLSFSGSD (109 aa)). A 1,2-diacyl-sn-glycero-3-phospho-(1D-myo-inositol-3-phosphate)-binding residues include arginine 104, lysine 130, and arginine 143. A Phosphothreonine modification is found at threonine 446. Serine 450 bears the Phosphoserine mark.

The protein belongs to the sorting nexin family.

It is found in the early endosome membrane. Its function is as follows. May be involved in several stages of intracellular trafficking. May play a role in intracellular protein transport from early endosomes to the trans-Golgi network. This is Sorting nexin-8 (Snx8) from Mus musculus (Mouse).